A 216-amino-acid chain; its full sequence is Probable nicotinate-nucleotide adenylyltransferase (216 aa).

Belongs to the NadD family.

The catalysed reaction is nicotinate beta-D-ribonucleotide + ATP + H(+) = deamido-NAD(+) + diphosphate. It participates in cofactor biosynthesis; NAD(+) biosynthesis; deamido-NAD(+) from nicotinate D-ribonucleotide: step 1/1. In terms of biological role, catalyzes the reversible adenylation of nicotinate mononucleotide (NaMN) to nicotinic acid adenine dinucleotide (NaAD). The polypeptide is Probable nicotinate-nucleotide adenylyltransferase (Klebsiella pneumoniae (strain 342)).